A 169-amino-acid polypeptide reads, in one-letter code: MGASPIFYLHSMHEGVQVSSKLEQLQALLAPVVEGLGYQCWGIEYVSQGKHSVLRIYIDKEGGILVEDCEAVSRQASAILDVEDPISSEYTLEVSSPGMDRPLFTLEQFASHAGEQVKIKLRTPFEGRRNFQGLLRGVEEQDVVVQVDSHEFLLPIDSIDKANIIPSFD.

Belongs to the RimP family.

It localises to the cytoplasm. Functionally, required for maturation of 30S ribosomal subunits. This Pseudomonas putida (strain W619) protein is Ribosome maturation factor RimP.